Here is a 195-residue protein sequence, read N- to C-terminus: Protein RD3 (195 aa).

The stretch at 22 to 54 forms a coiled coil; it reads AEMVLETLMMELAGQMREVERQQRERRSAVRKI. The span at 168-177 shows a compositional bias: basic and acidic residues; sequence TISEDVERDA. The disordered stretch occupies residues 168–195; sequence TISEDVERDAPPPPRTWSMPEFRAPQAD.

In terms of assembly, monomer. Interacts with GUCY2E; promotes the exit of GUCY2E from the endoplasmic reticulum and its trafficking to the photoreceptor outer segments. The interaction with GUCY2E negatively regulates its activity. Interacts with GUCY2F; promotes the exit of GUCY2F from the endoplasmic reticulum and its trafficking to the photoreceptor outer segments. The interaction with GUCY2F negatively regulates its activity. Interacts with GUK1; up-regulates GUK1 activity. Expressed in the retina and in particular in the inner nuclear layer, in rod and cone outer segments, in the outer nuclear layer, in the outer plexiform layer and in the ganglion cell layer.

The protein resides in the cell projection. It is found in the cilium. The protein localises to the photoreceptor outer segment. Its subcellular location is the photoreceptor inner segment. It localises to the endosome. The protein resides in the nucleus. It is found in the cytoplasm. The protein localises to the perinuclear region. Functionally, plays a critical role in the regulation of enzymes involved in nucleotide cycle in photoreceptors. Inhibits the basal catalytic activity and the GCAP-stimulated activity of GUCY2E and GUCY2F, two retinal guanylyl cyclases involved in the production of cGMP in photoreceptors. Involved in the transport of GUCY2E and GUCY2F to their target sites in the photoreceptor outer segment. Up-regulates the activity of GUK1, a kinase that also plays an essential role for recycling GMP and indirectly, cGMP. Plays an important role for the survival of rods and cones in the retina. This chain is Protein RD3 (Rd3), found in Mus musculus (Mouse).